The primary structure comprises 414 residues: Esterase FrsA (414 aa).

It belongs to the FrsA family.

It catalyses the reaction a carboxylic ester + H2O = an alcohol + a carboxylate + H(+). Functionally, catalyzes the hydrolysis of esters. This Shigella dysenteriae serotype 1 (strain Sd197) protein is Esterase FrsA.